A 349-amino-acid chain; its full sequence is Kelch domain-containing protein 9 (349 aa).

3 Kelch repeats span residues 39–89 (RFYL…PVDG), 91–137 (WLCV…SHTC), and 325–349 (QLYL…LDFI).

As to quaternary structure, interacts with CCNA1.

The chain is Kelch domain-containing protein 9 (KLHDC9) from Homo sapiens (Human).